We begin with the raw amino-acid sequence, 351 residues long: LETM1 domain-containing protein 1 (351 aa).

The Cytoplasmic segment spans residues 1–130; that stretch reads MLSGMALCRT…FRRDIIKAAP (130 aa). Residues 131-151 traverse the membrane as a helical segment; the sequence is VVIISIPPFANYLVFVLMYFF. At 152–351 the chain is on the mitochondrial intermembrane side; that stretch reads PRQLLIRHFW…SANYLQSIKQ (200 aa). Residues 172–351 enclose the Letm1 RBD domain; it reads IYHRMRVEAY…SANYLQSIKQ (180 aa).

Its subcellular location is the mitochondrion outer membrane. It localises to the nucleus. The protein resides in the mitochondrion inner membrane. Functionally, may play an essential role for mitochondrial structure and function. The sequence is that of LETM1 domain-containing protein 1 from Xenopus tropicalis (Western clawed frog).